A 149-amino-acid polypeptide reads, in one-letter code: D-aminoacyl-tRNA deacylase (149 aa).

Positions 137-138 (GP) match the Gly-cisPro motif, important for rejection of L-amino acids motif.

The protein belongs to the DTD family. In terms of assembly, homodimer.

It is found in the cytoplasm. It catalyses the reaction glycyl-tRNA(Ala) + H2O = tRNA(Ala) + glycine + H(+). It carries out the reaction a D-aminoacyl-tRNA + H2O = a tRNA + a D-alpha-amino acid + H(+). Its function is as follows. An aminoacyl-tRNA editing enzyme that deacylates mischarged D-aminoacyl-tRNAs. Also deacylates mischarged glycyl-tRNA(Ala), protecting cells against glycine mischarging by AlaRS. Acts via tRNA-based rather than protein-based catalysis; rejects L-amino acids rather than detecting D-amino acids in the active site. By recycling D-aminoacyl-tRNA to D-amino acids and free tRNA molecules, this enzyme counteracts the toxicity associated with the formation of D-aminoacyl-tRNA entities in vivo and helps enforce protein L-homochirality. This is D-aminoacyl-tRNA deacylase from Clostridium novyi (strain NT).